We begin with the raw amino-acid sequence, 500 residues long: Cytochrome P450 71B22 (500 aa).

The chain crosses the membrane as a helical span at residues Met-1–Leu-21. Cys-441 provides a ligand contact to heme.

It belongs to the cytochrome P450 family. Heme serves as cofactor.

The protein localises to the membrane. The protein is Cytochrome P450 71B22 (CYP71B22) of Arabidopsis thaliana (Mouse-ear cress).